Consider the following 245-residue polypeptide: 1-(5-phosphoribosyl)-5-[(5-phosphoribosylamino)methylideneamino] imidazole-4-carboxamide isomerase (245 aa).

The active-site Proton acceptor is the Asp12. The active-site Proton donor is Asp131.

Belongs to the HisA/HisF family.

It localises to the cytoplasm. The enzyme catalyses 1-(5-phospho-beta-D-ribosyl)-5-[(5-phospho-beta-D-ribosylamino)methylideneamino]imidazole-4-carboxamide = 5-[(5-phospho-1-deoxy-D-ribulos-1-ylimino)methylamino]-1-(5-phospho-beta-D-ribosyl)imidazole-4-carboxamide. Its pathway is amino-acid biosynthesis; L-histidine biosynthesis; L-histidine from 5-phospho-alpha-D-ribose 1-diphosphate: step 4/9. In Thermobifida fusca (strain YX), this protein is 1-(5-phosphoribosyl)-5-[(5-phosphoribosylamino)methylideneamino] imidazole-4-carboxamide isomerase.